The chain runs to 1049 residues: Solvent-resistant pump membrane transporter SrpB (1049 aa).

12 helical membrane passes run 10–30 (IFAWVLAIVAMLAGALSLAKM), 339–359 (SVVHTIFEAVVLVFLVMYLFL), 366–386 (LIPTLAVPVVLLATFALLPYF), 392–412 (VLTMYAMVLAIGLLVDDAIVV), 440–460 (GALVGIGMVLSAVFVPMAFFG), 470–490 (FAITIVVCMGLSILVALVFTP), 542–562 (LAFLLITGGTGYLFTQIPKAF), 871–891 (APLLYALTVLIVFLCLAALYE), 895–915 (VPVSVIMVVPLGILGAVLATL), 927–947 (VGLMTTVGLSAKNAILIVEFA), 973–993 (ILMTSLAFTFGVLPMAIASGA), and 1008–1028 (GMITATVLAVFFVPLFYVVVV).

It belongs to the resistance-nodulation-cell division (RND) (TC 2.A.6) family.

It is found in the cell inner membrane. In terms of biological role, the inner membrane transporter component of an organic solvent efflux pump. Involved in export of a number of low log POW compounds including hexane (log POW 3.5), toluene (log POW 2.5) and dimethylphthalate (log POW 2.3). The solvent resistance phenotype has been postulated to depend on the operon expression level. The polypeptide is Solvent-resistant pump membrane transporter SrpB (srpB) (Pseudomonas putida (Arthrobacter siderocapsulatus)).